An 885-amino-acid chain; its full sequence is Insulin receptor substrate 1-A (885 aa).

Residues 1–56 (MNIRRCGHSENFFFIEVGRSAVTGAGEFWMQVDDSVVAQNMHETILEAMKALSDEF) enclose the IRS-type PTB domain. Residues 56 to 225 (FRPRSKSQSS…GGFISSDEYG (170 aa)) form a disordered region. Composition is skewed to low complexity over residues 61–75 (KSQSSSNCSNPISVP), 99–109 (SATATSPAGGA), 176–197 (SPSATSPVSLSSSSTSGHGSTS), and 205–217 (SSASISGSPSDGG). Ser104 is subject to Phosphoserine. Position 257 is a phosphotyrosine; by INSR (Tyr257). The short motif at 257-260 (YICM) is the YXXM motif 1 element. 2 stretches are compositionally biased toward polar residues: residues 263-276 (SSSHLQRGPQQRYQ) and 296-313 (SSGTSPPTVSHQKTPSQS). Disordered stretches follow at residues 263–282 (SSSHLQRGPQQRYQPSRGEE) and 293–313 (RTHSSGTSPPTVSHQKTPSQS). 5 consecutive short sequence motifs (YXXM motif) follow at residues 318–321 (YTEM), 364–367 (YMPM), 381–384 (YMPM), 409–412 (YMMM), and 451–454 (YINM). Tyr364 and Tyr381 each carry phosphotyrosine; by INSR. Tyr409 bears the Phosphotyrosine mark. The interval 501 to 581 (NLRISANSGH…LPPEPKSPGE (81 aa)) is disordered. Positions 504 to 515 (ISANSGHNLYTE) are enriched in polar residues. Residues 516-526 (DSSSSSTSSDS) show a composition bias toward low complexity. Phosphotyrosine; by INSR is present on residues Tyr582 and Tyr620. Residues 582–584 (YVN) form a GRB2-binding region. The YXXM motif 7 signature appears at 620 to 623 (YMNM). Positions 637–660 (TSSYEPPNKPVNSVCPTETCSSSR) are enriched in polar residues. The interval 637 to 665 (TSSYEPPNKPVNSVCPTETCSSSRPPIRG) is disordered. Tyr672 carries the phosphotyrosine; by INSR modification. 2 short sequence motifs (YXXM motif) span residues 672-675 (YMSM) and 706-709 (YAEM). A disordered region spans residues 732 to 803 (ASRSSLLGQG…SGEDVKRHSS (72 aa)). 2 stretches are compositionally biased toward polar residues: residues 743–758 (GPSAFTRVSLSPNRNP) and 777–792 (ETFSSTPTTARVTTGP). Phosphotyrosine; by INSR is present on residues Tyr834 and Tyr866.

Interacts with the NPXY motif of tyrosine-phosphorylated igf1r and insr via the PTB domain. Binds to phosphatidylinositol 3-kinase p85 subunit at a low level in vitro prior to phosphorylation. Binding is greatly enhanced following tyrosine phosphorylation by insr and probably occurs via the phosphorylated YXXM motifs. Phosphorylation of Tyr-582 is required for grb2-binding.

Functionally, may mediate the control of various cellular processes by insulin. When phosphorylated by the insulin receptor binds specifically to various cellular proteins containing SH2 domains such as phosphatidylinositol 3-kinase p85 subunit or grb2. Activates phosphatidylinositol 3-kinase when bound to the regulatory p85 subunit. The chain is Insulin receptor substrate 1-A (irs1-a) from Xenopus laevis (African clawed frog).